The chain runs to 154 residues: Myoglobin (154 aa).

The Globin domain occupies 2 to 148; it reads VLSDAEWHLV…FRKDIAAKYK (147 aa). Residue serine 4 is modified to Phosphoserine. Histidine 65 serves as a coordination point for nitrite. Histidine 65 is a binding site for O2. Position 68 is a phosphothreonine (threonine 68). Heme b is bound at residue histidine 94.

The protein belongs to the globin family. As to quaternary structure, monomeric.

It is found in the cytoplasm. It localises to the sarcoplasm. The enzyme catalyses Fe(III)-heme b-[protein] + nitric oxide + H2O = Fe(II)-heme b-[protein] + nitrite + 2 H(+). The catalysed reaction is H2O2 + AH2 = A + 2 H2O. Its function is as follows. Monomeric heme protein which primary function is to store oxygen and facilitate its diffusion within muscle tissues. Reversibly binds oxygen through a pentacoordinated heme iron and enables its timely and efficient release as needed during periods of heightened demand. Depending on the oxidative conditions of tissues and cells, and in addition to its ability to bind oxygen, it also has a nitrite reductase activity whereby it regulates the production of bioactive nitric oxide. Under stress conditions, like hypoxia and anoxia, it also protects cells against reactive oxygen species thanks to its pseudoperoxidase activity. In Balaenoptera acutorostrata (Common minke whale), this protein is Myoglobin (MB).